Reading from the N-terminus, the 300-residue chain is 11-beta-hydroxysteroid dehydrogenase 1 (300 aa).

Topologically, residues 1–7 (MAFLKKY) are cytoplasmic. Residues 8–24 (LLTILMVFLAYYYYSAN) traverse the membrane as a helical; Signal-anchor for type II membrane protein segment. Residues 25–300 (EKFRPEMLQG…SNEKLYGRWA (276 aa)) lie on the Lumenal side of the membrane. NADP(+) contacts are provided by residues 41–67 (GASK…TARS), 92–93 (SM), and 119–123 (NHVLY). A substrate-binding site is contributed by S170. The Proton acceptor role is filled by Y183. Position 183–187 (183–187 (YSASK)) interacts with NADP(+). N-linked (GlcNAc...) asparagine glycosylation occurs at N207. Residue 218–222 (IDTET) participates in NADP(+) binding.

It belongs to the short-chain dehydrogenases/reductases (SDR) family. In terms of assembly, homodimer. As to expression, widely expressed in all peripheral tissues, with highest expression in liver, followed by kidney and lung, and very low expression in heart, lung, spleen, stomach, small intestine, colon, skin, skeletal muscle, and ovary.

Its subcellular location is the endoplasmic reticulum membrane. The catalysed reaction is an 11beta-hydroxysteroid + NADP(+) = an 11-oxosteroid + NADPH + H(+). It catalyses the reaction cortisone + NADPH + H(+) = cortisol + NADP(+). It carries out the reaction corticosterone + NADP(+) = 11-dehydrocorticosterone + NADPH + H(+). The enzyme catalyses a 7beta-hydroxysteroid + NADP(+) = a 7-oxosteroid + NADPH + H(+). The catalysed reaction is 7-oxocholesterol + NADPH + H(+) = 7beta-hydroxycholesterol + NADP(+). It catalyses the reaction chenodeoxycholate + NADP(+) = 7-oxolithocholate + NADPH + H(+). It carries out the reaction 7-oxolithocholate + NADPH + H(+) = ursodeoxycholate + NADP(+). The enzyme catalyses glycochenodeoxycholate + NADP(+) = 7-oxoglycolithocholate + NADPH + H(+). The catalysed reaction is taurochenodeoxycholate + NADP(+) = 7-oxotaurolithocholate + NADPH + H(+). It catalyses the reaction tauroursodeoxycholate + NADP(+) = 7-oxotaurolithocholate + NADPH + H(+). It carries out the reaction glycoursodeoxycholate + NADP(+) = 7-oxoglycolithocholate + NADPH + H(+). The enzyme catalyses 7-oxopregnenolone + NADPH + H(+) = 7beta-hydroxypregnenolone + NADP(+). The catalysed reaction is 3beta,7alpha-dihydroxyandrost-5-en-17-one + NADP(+) = 3beta-hydroxy-5-androstene-7,17-dione + NADPH + H(+). It catalyses the reaction 3beta-hydroxy-5-androstene-7,17-dione + NADPH + H(+) = 3beta,7beta-dihydroxyandrost-5-en-17-one + NADP(+). It carries out the reaction 3beta-hydroxy-5alpha-androstane-7,17-dione + NADPH + H(+) = 3beta,7beta-dihydroxy-5alpha-androstan-17-one + NADP(+). In terms of biological role, controls the reversible conversion of biologically active glucocorticoids such as cortisone to cortisol, and 11-dehydrocorticosterone to corticosterone in the presence of NADP(H). Participates in the corticosteroid receptor-mediated anti-inflammatory response, as well as metabolic and homeostatic processes. Bidirectional in vitro, predominantly functions as a reductase in vivo, thereby increasing the concentration of active glucocorticoids. It has broad substrate specificity, besides glucocorticoids, it accepts other steroid and sterol substrates. Interconverts 7-oxo- and 7-hydroxy-neurosteroids such as 7-oxopregnenolone and 7beta-hydroxypregnenolone, 7-oxodehydroepiandrosterone (3beta-hydroxy-5-androstene-7,17-dione) and 7beta-hydroxydehydroepiandrosterone (3beta,7beta-dihydroxyandrost-5-en-17-one), among others. Catalyzes the stereo-specific conversion of the major dietary oxysterol, 7-ketocholesterol (7-oxocholesterol), into the more polar 7-beta-hydroxycholesterol metabolite. 7-oxocholesterol is one of the most important oxysterols, it participates in several events such as induction of apoptosis, accumulation in atherosclerotic lesions, lipid peroxidation, and induction of foam cell formation. Mediates the 7-oxo reduction of 7-oxolithocholate mainly to chenodeoxycholate, and to a lesser extent to ursodeoxycholate, both in its free form and when conjugated to glycine or taurine, providing a link between glucocorticoid activation and bile acid metabolism. Catalyzes the synthesis of 7-beta-25-dihydroxycholesterol from 7-oxo-25-hydroxycholesterol in vitro, which acts as a ligand for the G-protein-coupled receptor (GPCR) Epstein-Barr virus-induced gene 2 (EBI2) and may thereby regulate immune cell migration. In Cavia porcellus (Guinea pig), this protein is 11-beta-hydroxysteroid dehydrogenase 1 (HSD11B1).